The sequence spans 249 residues: tRNA pseudouridine synthase A (249 aa).

Residue Asp53 is the Nucleophile of the active site. Tyr111 is a binding site for substrate.

The protein belongs to the tRNA pseudouridine synthase TruA family. As to quaternary structure, homodimer.

It catalyses the reaction uridine(38/39/40) in tRNA = pseudouridine(38/39/40) in tRNA. Functionally, formation of pseudouridine at positions 38, 39 and 40 in the anticodon stem and loop of transfer RNAs. The sequence is that of tRNA pseudouridine synthase A from Streptococcus suis (strain 05ZYH33).